The chain runs to 32 residues: Trypsin inhibitor 4 (32 aa).

Disulfide bonds link cysteine 6–cysteine 23, cysteine 13–cysteine 25, and cysteine 19–cysteine 31.

The protein belongs to the protease inhibitor I7 (squash-type serine protease inhibitor) family.

The protein resides in the secreted. Its function is as follows. Inhibits trypsin. The chain is Trypsin inhibitor 4 from Cucurbita maxima (Pumpkin).